The following is a 350-amino-acid chain: F(420)H(2) dehydrogenase subunit H (350 aa).

8 helical membrane-spanning segments follow: residues 21–41 (GTVGLVLVGAIFLGGMAAVWI), 94–114 (VFMLTSLFLMLVAIPVGAVFI), 128–148 (ISILFIEAVSAINIFGIFMAA), 173–193 (PLGIAIVSVAVMTGSLNIIDI), 200–220 (FVWNIFLQPIGFVVFFIALMA), 261–281 (ILGSFLVALLFLGGWNVPAFV), 288–308 (GLIAPTGILLLKTVLVLMTII), and 330–350 (LLPLSLLNLAWAVGLGLYLGA).

It belongs to the complex I subunit 1 family. The FPO complex is composed of at least 13 different subunits. FpoA, FpoH, FpoJ, FpoK, FpoL, FpoM and FpoN proteins constitute the membrane sector of the complex.

The protein resides in the cell membrane. It catalyses the reaction methanophenazine + reduced coenzyme F420-(gamma-L-Glu)(n) = dihydromethanophenazine + oxidized coenzyme F420-(gamma-L-Glu)(n) + H(+). Its function is as follows. Component of the F(420)H(2) dehydrogenase (FPO complex) which is part of the energy-conserving F(420)H(2):heterodisulfide oxidoreductase system. The membrane-bound electron transfer system of the complex plays an important role in the metabolism of methylotrophic methanogens when the organisms grow on methanol or methylamines. Catalyzes the oxidation of methanophenazine to dihydromethanophenazine. It shuttles electrons from F(420)H(2), via FAD and iron-sulfur (Fe-S) centers, to methanophenazine (an electron carrier in the membrane). It couples the redox reaction to proton translocation (for every two electrons transferred, two hydrogen ions are translocated across the cytoplasmic membrane), and thus conserves the redox energy in a proton gradient. It also catalyzes the oxidation of F(420)H(2) with quinones such as 2,3-dimethyl-1,4-naphthoquinone, 2-methyl-1,4-naphthoquinone and tetramethyl-p-benzoquinone. In Methanosarcina mazei (strain ATCC BAA-159 / DSM 3647 / Goe1 / Go1 / JCM 11833 / OCM 88) (Methanosarcina frisia), this protein is F(420)H(2) dehydrogenase subunit H.